The sequence spans 82 residues: Chaplin-E (82 aa).

An N-terminal signal peptide occupies residues 1 to 27; it reads MKNLKKAAAVTMVAGGLIAAGAGMASA. Residues 41 to 81 form the Chaplin domain; it reads SPGVASGNLVQAPIHIPVNAVGNSVNVIGVLNPAFGNLGVN.

This sequence belongs to the chaplin family. Short chaplin subfamily.

Its subcellular location is the cell surface. It is found in the secreted. The protein localises to the cell wall. It localises to the fimbrium. One of 8 partially redundant surface-active proteins required for efficient formation of aerial mycelium; the short chaplins assemble into a hydrophobic, amyloidal fibrillar surface layer that envelopes and protects aerial hyphae and spores, presumably anchored to the long chaplins. Chaplins have an overlapping function with the surface-active SapB peptide; chaplins are essential on minimal medium while on rich medium both chaplins and SapB are required for efficient aerial hyphae formation. Chaplins are also involved in cell attachment to a hydrophobic surface. Forms amyloid fibrils in vitro probably composed of stacked beta-sheets, at low extracellular concentrations individually restores the ability to form aerial hyphae to a chaplin-deficient strain, but does so less well than other short chaplins. A small chaplin extract (ChpD, ChpE, ChpF, ChpG and ChpH) self-assembles into 2 different amyloids; small fibrils at the air-water interface form an amphipathic membrane that resembles spore-surface structures involved in aerial hyphae formation, and hydrophilic fibrils in solution that resemble the fibers that attach cells to a hydrophobic surface. At the air-water interface the hydrophilic surface is in contact with water (probably equivalent to the peptidoglycan layer), while the hydrophobic face is exposed to the air, making the surface of the aerial hyphae hydrophobic. A minimal chaplin strain capable of forming aerial mycelium/hyphae on minimal medium contains ChpC, ChpE and ChpH. The strain also has restored rodlet formation on the hyphae surface. A second strain with ChpA, ChpD and ChpE makes slightly less robust hyphae. This essential chaplin may coordinate the assembly and/or polymerization of the other chaplins. A small chaplin extract applied to a chaplin-deficient strain restores aerial hyphae formation. The small chaplin extract forms an amyloid-like structure similar to that seen on the surface of cells without rodlets (rdlA-rdlB deletions), and is highly surface active, reducing surface tension from 72 to 26 mJ/m(2), which probably allows escape of hyphae from an aqueous environment into air. The chain is Chaplin-E from Streptomyces coelicolor (strain ATCC BAA-471 / A3(2) / M145).